The following is a 74-amino-acid chain: Conotoxin AbVIH (74 aa).

Positions 1–17 are cleaved as a signal peptide; that stretch reads VLIIAVLFLTACQLTTA. A propeptide spanning residues 18-40 is cleaved from the precursor; the sequence is ETSSRGKQKHRALRSTDKDSRMT. The disordered stretch occupies residues 19–40; the sequence is TSSRGKQKHRALRSTDKDSRMT. 3 disulfide bridges follow: Cys-43/Cys-57, Cys-50/Cys-61, and Cys-56/Cys-68.

Belongs to the conotoxin O1 superfamily. Expressed by the venom duct.

The protein localises to the secreted. The sequence is that of Conotoxin AbVIH from Conus abbreviatus (Abbreviated cone).